The chain runs to 113 residues: MGKKGALVKNIGIEGVNPPSKTCDDINCPFHGNLRVRGIILEGRLIRYRAEKTGVVERDYLFYDTKYKRYERRRSRIHVHIPPCLDVKEGDNVIIAECRPIAKSVSFVVIGKR.

This sequence belongs to the universal ribosomal protein uS17 family. As to quaternary structure, part of the 30S ribosomal subunit.

Its function is as follows. One of the primary rRNA binding proteins, it binds specifically to the 5'-end of 16S ribosomal RNA. This is Small ribosomal subunit protein uS17 from Sulfurisphaera tokodaii (strain DSM 16993 / JCM 10545 / NBRC 100140 / 7) (Sulfolobus tokodaii).